The following is a 192-amino-acid chain: Adenine phosphoribosyltransferase 2 (192 aa).

This sequence belongs to the purine/pyrimidine phosphoribosyltransferase family. In terms of assembly, homodimer.

It is found in the cytoplasm. The enzyme catalyses AMP + diphosphate = 5-phospho-alpha-D-ribose 1-diphosphate + adenine. It functions in the pathway purine metabolism; AMP biosynthesis via salvage pathway; AMP from adenine: step 1/1. Functionally, catalyzes a salvage reaction resulting in the formation of AMP, that is energically less costly than de novo synthesis. May contribute to the recycling of adenine into adenylate nucleotides and the inactivation of cytokinins by phosphoribosylation. Possesses low activity toward adenine and cytokinins. The polypeptide is Adenine phosphoribosyltransferase 2 (APT2) (Arabidopsis thaliana (Mouse-ear cress)).